The chain runs to 829 residues: uncharacterized protein (829 aa).

Belongs to the IIV-6 050L family.

This is an uncharacterized protein from Invertebrate iridescent virus 3 (IIV-3).